Here is a 267-residue protein sequence, read N- to C-terminus: Phosphonoacetaldehyde hydrolase (267 aa).

Asp10 functions as the Nucleophile in the catalytic mechanism. Mg(2+) is bound by residues Asp10 and Ala12. Lys51 functions as the Schiff-base intermediate with substrate in the catalytic mechanism. A Mg(2+)-binding site is contributed by Asp184.

This sequence belongs to the HAD-like hydrolase superfamily. PhnX family. As to quaternary structure, homodimer. Mg(2+) is required as a cofactor.

The catalysed reaction is phosphonoacetaldehyde + H2O = acetaldehyde + phosphate + H(+). Functionally, involved in phosphonate degradation. The polypeptide is Phosphonoacetaldehyde hydrolase (Paraburkholderia phytofirmans (strain DSM 17436 / LMG 22146 / PsJN) (Burkholderia phytofirmans)).